We begin with the raw amino-acid sequence, 640 residues long: uncharacterized protein (640 aa).

The TIR domain maps to 184 to 328; sequence VKRDTIFIIK…KVQRSIDTMI (145 aa). The segment at 613-640 is disordered; it reads LPNDLDDEDEELDDSTLGRPDSDEEGGE. The span at 616–626 shows a compositional bias: acidic residues; that stretch reads DLDDEDEELDD.

This is an uncharacterized protein from Sinorhizobium fredii (strain NBRC 101917 / NGR234).